The primary structure comprises 79 residues: Ixosin (79 aa).

Residues 1-56 constitute a propeptide, removed in mature form; sequence MSAHKVQIGLSSGQFRVALQVPSVRLKGLGSFHTGSIVLPSQGSLREDQISLHNQD.

Functionally, has antifungal activity against C.albicans. Has antibacterial activity against the Gram-positive bacterium S.aureus and the Gram-negative bacterium E.coli. Lacks hemolytic activity against rabbit erythrocytes. The sequence is that of Ixosin from Ixodes sinensis (Hard tick).